A 375-amino-acid chain; its full sequence is Growth/differentiation factor 8 (375 aa).

Residues 1 to 18 form the signal peptide; the sequence is MQKLQIFVYIYLFMLTVA. A propeptide spanning residues 19 to 266 is cleaved from the precursor; the sequence is GPVDLNENSE…VTDTPKRARR (248 aa). 2 N-linked (GlcNAc...) asparagine glycosylation sites follow: Asn48 and Asn71. 4 disulfides stabilise this stretch: Cys272–Cys282, Cys281–Cys340, Cys309–Cys372, and Cys313–Cys374.

It belongs to the TGF-beta family. In terms of assembly, homodimer; disulfide-linked. Interacts with WFIKKN2, leading to inhibit its activity. Interacts with FSTL3. Synthesized as large precursor molecule that undergoes proteolytic cleavage to generate an N-terminal propeptide and a disulfide linked C-terminal dimer, which is the biologically active molecule. The circulating form consists of a latent complex of the C-terminal dimer and other proteins, including its propeptide, which maintain the C-terminal dimer in a latent, inactive state. Ligand activation requires additional cleavage of the prodomain by a tolloid-like metalloproteinase.

It is found in the secreted. In terms of biological role, acts specifically as a negative regulator of skeletal muscle growth. The polypeptide is Growth/differentiation factor 8 (MSTN) (Sylvicapra grimmia (Grey duiker)).